We begin with the raw amino-acid sequence, 300 residues long: MDTTLSHTPGSRLSQYLALTKPRVTQLAVFCAVIGMFLATPGMVPWKVLLGGTIGIGLLAGSAFAINCLVEQKIDAMMRRTAWRPSARGEITTLQILAFSTVLGGLGAWTLYTFTNPLTIWLTIATFVGYAVIYTLLLKPMTPQNIVIGGASGAMPPALGWAAVTGAVPGDAWILVLIIFVWTPPHFWVLALYRRKDYENAGLPMLPVTHGEQFTRLHILLYTVILFAVTMMPFISGMSGAVYLTSAVLLGALFLAYAWKIYRDYSDALARRAFRYSIVYLSLLFAALLVDHYARPVIGM.

The next 9 helical transmembrane spans lie at 24-44 (VTQL…PGMV), 48-68 (VLLG…AINC), 94-114 (LQIL…LYTF), 118-138 (LTIW…TLLL), 146-166 (IVIG…AVTG), 172-192 (AWIL…VLAL), 217-237 (LHIL…FISG), 239-259 (SGAV…AYAW), and 278-298 (IVYL…RPVI).

This sequence belongs to the UbiA prenyltransferase family. Protoheme IX farnesyltransferase subfamily.

It is found in the cell inner membrane. It catalyses the reaction heme b + (2E,6E)-farnesyl diphosphate + H2O = Fe(II)-heme o + diphosphate. The protein operates within porphyrin-containing compound metabolism; heme O biosynthesis; heme O from protoheme: step 1/1. Converts heme B (protoheme IX) to heme O by substitution of the vinyl group on carbon 2 of heme B porphyrin ring with a hydroxyethyl farnesyl side group. The polypeptide is Protoheme IX farnesyltransferase (Burkholderia mallei (strain NCTC 10247)).